A 229-amino-acid polypeptide reads, in one-letter code: Cytidylate kinase (229 aa).

12 to 20 (GPSGVGKST) lines the ATP pocket.

It belongs to the cytidylate kinase family. Type 1 subfamily.

It is found in the cytoplasm. It carries out the reaction CMP + ATP = CDP + ADP. The catalysed reaction is dCMP + ATP = dCDP + ADP. This chain is Cytidylate kinase, found in Mesomycoplasma hyopneumoniae (strain 232) (Mycoplasma hyopneumoniae).